The primary structure comprises 428 residues: Adenylosuccinate synthetase (428 aa).

GTP contacts are provided by residues 12-18 and 40-42; these read GDEGKGK and GHT. Aspartate 13 acts as the Proton acceptor in catalysis. Mg(2+) is bound by residues aspartate 13 and glycine 40. IMP is bound by residues 13–16, 38–41, threonine 128, arginine 142, glutamine 223, threonine 238, and arginine 302; these read DEGK and NAGH. The active-site Proton donor is histidine 41. Position 298–304 (298–304) interacts with substrate; it reads TTTGRPR. GTP-binding positions include arginine 304, 330–332, and 412–414; these read KLD and SVG.

The protein belongs to the adenylosuccinate synthetase family. Homodimer. Requires Mg(2+) as cofactor.

Its subcellular location is the cytoplasm. It carries out the reaction IMP + L-aspartate + GTP = N(6)-(1,2-dicarboxyethyl)-AMP + GDP + phosphate + 2 H(+). It functions in the pathway purine metabolism; AMP biosynthesis via de novo pathway; AMP from IMP: step 1/2. In terms of biological role, plays an important role in the de novo pathway of purine nucleotide biosynthesis. Catalyzes the first committed step in the biosynthesis of AMP from IMP. This chain is Adenylosuccinate synthetase, found in Desulforamulus reducens (strain ATCC BAA-1160 / DSM 100696 / MI-1) (Desulfotomaculum reducens).